The chain runs to 153 residues: Heavy metal-associated isoprenylated plant protein 25 (153 aa).

The HMA domain occupies 24–88; that stretch reads LQTVDVRVLI…IIHRTGKRAE (65 aa). A metal cation-binding residues include cysteine 35 and cysteine 38. Cysteine 150 is modified (cysteine methyl ester). Cysteine 150 carries S-farnesyl cysteine lipidation. The propeptide at 151–153 is removed in mature form; the sequence is VVM.

Belongs to the HIPP family. Expressed in roots, shoot apical meristem, trichomes and flower buds.

The protein localises to the membrane. Its function is as follows. Heavy-metal-binding protein. Binds cadmium. May be involved in cadmium transport and play a role in cadmium detoxification. In Arabidopsis thaliana (Mouse-ear cress), this protein is Heavy metal-associated isoprenylated plant protein 25.